Reading from the N-terminus, the 309-residue chain is Porphobilinogen deaminase (309 aa).

At cysteine 241 the chain carries S-(dipyrrolylmethanemethyl)cysteine.

Belongs to the HMBS family. Monomer. Requires dipyrromethane as cofactor.

The catalysed reaction is 4 porphobilinogen + H2O = hydroxymethylbilane + 4 NH4(+). It participates in porphyrin-containing compound metabolism; protoporphyrin-IX biosynthesis; coproporphyrinogen-III from 5-aminolevulinate: step 2/4. Functionally, tetrapolymerization of the monopyrrole PBG into the hydroxymethylbilane pre-uroporphyrinogen in several discrete steps. This Bacillus cereus (strain ZK / E33L) protein is Porphobilinogen deaminase.